Reading from the N-terminus, the 328-residue chain is Probable cytosolic iron-sulfur protein assembly protein 1 (328 aa).

7 WD repeats span residues 12 to 49 (LHGDRCWSVDISKGLLATGSADRKIKLVDVRNFKLVEE), 54 to 93 (AHKKAVRSVAWRPHCNVLAAGSFDTTVSIWGRDDDDYSGE), 102 to 141 (GHENEVKSVAWSHDGAYLATCSRDKSVWIWEADELSEEFE), 148 to 187 (EHSQDVKHIVWHASRLLLASSSYDDTVRIWAEQDDDWECA), 192 to 233 (GHGG…ADVF), 246 to 284 (VHTRAVYSVSWSADGLIASVGSDGVLAVYKEVQAGRWEV), and 291 to 328 (AHTVYEINVVKWLALDGRVLLVTGGDDGCVNVWELREE).

It belongs to the WD repeat CIA1 family. As to quaternary structure, interacts with NAR1.

It is found in the cytoplasm. The protein localises to the nucleus. Essential component of the cytosolic iron-sulfur (Fe/S) protein assembly machinery. Required for the maturation of extramitochondrial Fe/S proteins. This chain is Probable cytosolic iron-sulfur protein assembly protein 1, found in Eremothecium gossypii (strain ATCC 10895 / CBS 109.51 / FGSC 9923 / NRRL Y-1056) (Yeast).